A 462-amino-acid chain; its full sequence is ATP-dependent protease ATPase subunit HslU (462 aa).

Residues Ile-21, 63–68, Asp-275, Glu-340, and Arg-412 contribute to the ATP site; that span reads GVGKTE.

This sequence belongs to the ClpX chaperone family. HslU subfamily. A double ring-shaped homohexamer of HslV is capped on each side by a ring-shaped HslU homohexamer. The assembly of the HslU/HslV complex is dependent on binding of ATP.

It is found in the cytoplasm. Functionally, ATPase subunit of a proteasome-like degradation complex; this subunit has chaperone activity. The binding of ATP and its subsequent hydrolysis by HslU are essential for unfolding of protein substrates subsequently hydrolyzed by HslV. HslU recognizes the N-terminal part of its protein substrates and unfolds these before they are guided to HslV for hydrolysis. The sequence is that of ATP-dependent protease ATPase subunit HslU from Pseudothermotoga lettingae (strain ATCC BAA-301 / DSM 14385 / NBRC 107922 / TMO) (Thermotoga lettingae).